Here is a 372-residue protein sequence, read N- to C-terminus: Glutamate 5-kinase (372 aa).

Lysine 14 lines the ATP pocket. Substrate contacts are provided by serine 54, aspartate 141, and asparagine 153. ATP is bound at residue 173 to 174 (TD). Residues 280 to 358 (RGTLVLDDGA…DAIEALLGYV (79 aa)) form the PUA domain.

Belongs to the glutamate 5-kinase family.

Its subcellular location is the cytoplasm. The enzyme catalyses L-glutamate + ATP = L-glutamyl 5-phosphate + ADP. The protein operates within amino-acid biosynthesis; L-proline biosynthesis; L-glutamate 5-semialdehyde from L-glutamate: step 1/2. Catalyzes the transfer of a phosphate group to glutamate to form L-glutamate 5-phosphate. The chain is Glutamate 5-kinase from Pseudomonas aeruginosa (strain UCBPP-PA14).